The primary structure comprises 765 residues: Probable dipeptidyl peptidase 4 (765 aa).

The first 14 residues, 1–14 (MKWSILLLVGCAAA), serve as a signal peptide directing secretion. Asn35, Asn78, Asn101, Asn110, Asn169, Asn218, Asn465, and Asn490 each carry an N-linked (GlcNAc...) asparagine glycan. Ser613 serves as the catalytic Charge relay system. A glycan (N-linked (GlcNAc...) asparagine) is linked at Asn665. Residues Asp690 and His725 each act as charge relay system in the active site.

This sequence belongs to the peptidase S9B family.

It is found in the secreted. It catalyses the reaction Release of an N-terminal dipeptide, Xaa-Yaa-|-Zaa-, from a polypeptide, preferentially when Yaa is Pro, provided Zaa is neither Pro nor hydroxyproline.. Functionally, extracellular dipeptidyl-peptidase which removes N-terminal dipeptides sequentially from polypeptides having unsubstituted N-termini provided that the penultimate residue is proline. Contributes to pathogenicity. The protein is Probable dipeptidyl peptidase 4 (dpp4) of Aspergillus fumigatus (strain CBS 144.89 / FGSC A1163 / CEA10) (Neosartorya fumigata).